The primary structure comprises 404 residues: XK-related protein 8 (404 aa).

The next 8 membrane-spanning stretches (helical) occupy residues 14-34 (FVFS…DVWV), 44-64 (FFWF…VQMF), 167-187 (AVQF…VVDY), 206-226 (SLIY…ALAL), 227-247 (FASV…LVFV), 263-283 (GEWL…FNVA), 292-312 (AIYH…WWCC), and 319-339 (EPYA…GLLF).

It belongs to the XK family.

The protein localises to the cell membrane. The catalysed reaction is a 1,2-diacyl-sn-glycero-3-phospho-L-serine(in) = a 1,2-diacyl-sn-glycero-3-phospho-L-serine(out). Its function is as follows. Phospholipid scramblase that promotes phosphatidylserine exposure on apoptotic cell surface, possibly by mediating phospholipid scrambling. Phosphatidylserine is a specific marker only present at the surface of apoptotic cells and acts as a specific signal for engulfment. The polypeptide is XK-related protein 8 (Tetraodon nigroviridis (Spotted green pufferfish)).